Consider the following 207-residue polypeptide: Large ribosomal subunit protein bL25 (207 aa).

It belongs to the bacterial ribosomal protein bL25 family. CTC subfamily. In terms of assembly, part of the 50S ribosomal subunit; part of the 5S rRNA/L5/L18/L25 subcomplex. Contacts the 5S rRNA. Binds to the 5S rRNA independently of L5 and L18.

Its function is as follows. This is one of the proteins that binds to the 5S RNA in the ribosome where it forms part of the central protuberance. This Dictyoglomus thermophilum (strain ATCC 35947 / DSM 3960 / H-6-12) protein is Large ribosomal subunit protein bL25.